We begin with the raw amino-acid sequence, 228 residues long: Probable septum site-determining protein MinC (228 aa).

Belongs to the MinC family. Interacts with MinD and FtsZ.

In terms of biological role, cell division inhibitor that blocks the formation of polar Z ring septums. Rapidly oscillates between the poles of the cell to destabilize FtsZ filaments that have formed before they mature into polar Z rings. Prevents FtsZ polymerization. This chain is Probable septum site-determining protein MinC, found in Pectobacterium atrosepticum (strain SCRI 1043 / ATCC BAA-672) (Erwinia carotovora subsp. atroseptica).